The sequence spans 261 residues: EKC/KEOPS complex subunit BUD32 (261 aa).

The Protein kinase domain maps to 16-261 (DVDIAPISQG…LRGRKRSMLG (246 aa)). Residues 22–30 (ISQGAEAIV) and Lys43 each bind ATP. The Proton acceptor role is filled by Asp161. Residues Ser187 and Ser189 each carry the phosphoserine; by autocatalysis modification.

The protein belongs to the protein kinase superfamily. BUD32 family. As to quaternary structure, component of the EKC/KEOPS complex composed of at least BUD32, CGI121, GON7, KAE1 and PCC1; the whole complex dimerizes.

The protein localises to the cytoplasm. Its subcellular location is the nucleus. The protein resides in the chromosome. It is found in the telomere. The catalysed reaction is L-seryl-[protein] + ATP = O-phospho-L-seryl-[protein] + ADP + H(+). It carries out the reaction L-threonyl-[protein] + ATP = O-phospho-L-threonyl-[protein] + ADP + H(+). Its function is as follows. Component of the EKC/KEOPS complex that is required for the formation of a threonylcarbamoyl group on adenosine at position 37 (t(6)A37) in tRNAs that read codons beginning with adenine. The complex is probably involved in the transfer of the threonylcarbamoyl moiety of threonylcarbamoyl-AMP (TC-AMP) to the N6 group of A37. BUD32 has ATPase activity in the context of the EKC/KEOPS complex and likely plays a supporting role to the catalytic subunit KAE1. The EKC/KEOPS complex also promotes both telomere uncapping and telomere elongation. The complex is required for efficient recruitment of transcriptional coactivators. Important for bud site selection. In Saccharomyces cerevisiae (strain ATCC 204508 / S288c) (Baker's yeast), this protein is EKC/KEOPS complex subunit BUD32 (BUD32).